Reading from the N-terminus, the 219-residue chain is Deoxyribose-phosphate aldolase 1 (219 aa).

The active-site Proton donor/acceptor is the D87. The active-site Schiff-base intermediate with acetaldehyde is the K149. K178 acts as the Proton donor/acceptor in catalysis.

The protein belongs to the DeoC/FbaB aldolase family. DeoC type 1 subfamily.

Its subcellular location is the cytoplasm. It carries out the reaction 2-deoxy-D-ribose 5-phosphate = D-glyceraldehyde 3-phosphate + acetaldehyde. It functions in the pathway carbohydrate degradation; 2-deoxy-D-ribose 1-phosphate degradation; D-glyceraldehyde 3-phosphate and acetaldehyde from 2-deoxy-alpha-D-ribose 1-phosphate: step 2/2. Catalyzes a reversible aldol reaction between acetaldehyde and D-glyceraldehyde 3-phosphate to generate 2-deoxy-D-ribose 5-phosphate. The polypeptide is Deoxyribose-phosphate aldolase 1 (Vibrio vulnificus (strain YJ016)).